The chain runs to 79 residues: Putative defensin-like protein 274 (79 aa).

An N-terminal signal peptide occupies residues 1–23 (MASSRFQLVALLVVFSLVISITA). Disulfide bonds link C35–C76, C41–C64, C47–C74, and C51–C75.

Belongs to the DEFL family.

The protein localises to the secreted. This is Putative defensin-like protein 274 from Arabidopsis thaliana (Mouse-ear cress).